Consider the following 129-residue polypeptide: Cytochrome c oxidase subunit 5B, mitochondrial (129 aa).

The transit peptide at 1 to 31 (MASRLLRGAGALAAQALRARGPSGAAAVRSM) directs the protein to the mitochondrion. An N6-acetyllysine mark is found at K68 and K86. Residues C91, C93, C113, and C116 each contribute to the Zn(2+) site. K121 bears the N6-acetyllysine mark.

The protein belongs to the cytochrome c oxidase subunit 5B family. Component of the cytochrome c oxidase (complex IV, CIV), a multisubunit enzyme composed of 14 subunits. The complex is composed of a catalytic core of 3 subunits MT-CO1, MT-CO2 and MT-CO3, encoded in the mitochondrial DNA, and 11 supernumerary subunits COX4I, COX5A, COX5B, COX6A, COX6B, COX6C, COX7A, COX7B, COX7C, COX8 and NDUFA4, which are encoded in the nuclear genome. The complex exists as a monomer or a dimer and forms supercomplexes (SCs) in the inner mitochondrial membrane with NADH-ubiquinone oxidoreductase (complex I, CI) and ubiquinol-cytochrome c oxidoreductase (cytochrome b-c1 complex, complex III, CIII), resulting in different assemblies (supercomplex SCI(1)III(2)IV(1) and megacomplex MCI(2)III(2)IV(2)).

It localises to the mitochondrion inner membrane. The protein operates within energy metabolism; oxidative phosphorylation. Its function is as follows. Component of the cytochrome c oxidase, the last enzyme in the mitochondrial electron transport chain which drives oxidative phosphorylation. The respiratory chain contains 3 multisubunit complexes succinate dehydrogenase (complex II, CII), ubiquinol-cytochrome c oxidoreductase (cytochrome b-c1 complex, complex III, CIII) and cytochrome c oxidase (complex IV, CIV), that cooperate to transfer electrons derived from NADH and succinate to molecular oxygen, creating an electrochemical gradient over the inner membrane that drives transmembrane transport and the ATP synthase. Cytochrome c oxidase is the component of the respiratory chain that catalyzes the reduction of oxygen to water. Electrons originating from reduced cytochrome c in the intermembrane space (IMS) are transferred via the dinuclear copper A center (CU(A)) of subunit 2 and heme A of subunit 1 to the active site in subunit 1, a binuclear center (BNC) formed by heme A3 and copper B (CU(B)). The BNC reduces molecular oxygen to 2 water molecules using 4 electrons from cytochrome c in the IMS and 4 protons from the mitochondrial matrix. This Pongo abelii (Sumatran orangutan) protein is Cytochrome c oxidase subunit 5B, mitochondrial (COX5B).